The primary structure comprises 109 residues: Large ribosomal subunit protein uL24 (109 aa).

Belongs to the universal ribosomal protein uL24 family. As to quaternary structure, part of the 50S ribosomal subunit.

Its function is as follows. One of two assembly initiator proteins, it binds directly to the 5'-end of the 23S rRNA, where it nucleates assembly of the 50S subunit. Functionally, one of the proteins that surrounds the polypeptide exit tunnel on the outside of the subunit. This chain is Large ribosomal subunit protein uL24, found in Rickettsia akari (strain Hartford).